A 182-amino-acid polypeptide reads, in one-letter code: Putative pre-16S rRNA nuclease (182 aa).

Belongs to the YqgF nuclease family.

It is found in the cytoplasm. Functionally, could be a nuclease involved in processing of the 5'-end of pre-16S rRNA. In Corynebacterium glutamicum (strain ATCC 13032 / DSM 20300 / JCM 1318 / BCRC 11384 / CCUG 27702 / LMG 3730 / NBRC 12168 / NCIMB 10025 / NRRL B-2784 / 534), this protein is Putative pre-16S rRNA nuclease.